The primary structure comprises 173 residues: 3-hydroxydecanoyl-[acyl-carrier-protein] dehydratase (173 aa).

Residue His-71 is part of the active site.

The protein belongs to the thioester dehydratase family. FabA subfamily. As to quaternary structure, homodimer.

Its subcellular location is the cytoplasm. The catalysed reaction is a (3R)-hydroxyacyl-[ACP] = a (2E)-enoyl-[ACP] + H2O. It carries out the reaction (3R)-hydroxydecanoyl-[ACP] = (2E)-decenoyl-[ACP] + H2O. The enzyme catalyses (2E)-decenoyl-[ACP] = (3Z)-decenoyl-[ACP]. The protein operates within lipid metabolism; fatty acid biosynthesis. In terms of biological role, necessary for the introduction of cis unsaturation into fatty acids. Catalyzes the dehydration of (3R)-3-hydroxydecanoyl-ACP to E-(2)-decenoyl-ACP and then its isomerization to Z-(3)-decenoyl-ACP. Can catalyze the dehydratase reaction for beta-hydroxyacyl-ACPs with saturated chain lengths up to 16:0, being most active on intermediate chain length. This Bradyrhizobium sp. (strain BTAi1 / ATCC BAA-1182) protein is 3-hydroxydecanoyl-[acyl-carrier-protein] dehydratase.